The primary structure comprises 254 residues: MDIIQAIIIGIIEGFTEFLPISSTGHMIVASKFLGVAETDLTKAYEVIIQFAAILAVMLIYREKITFKKIDLWMKLLFAFLPLAIVGFIFKDQVKALFNVQVVAWMFIIGGIIFLIVEYYYKEQAWHVKDVEKVSWTQAWWVGFAQIFSLIPGTSRAGATIIGGLLAGLDRKTSAEFSFLLAIPVMAVVSGYDLLKHYQDFADANWGAFLIGFIVAFIVAYATIKLFLVFLQRFTFVAFGIYRIIFGIFLLMIL.

The next 8 helical transmembrane spans lie at 1 to 21, 41 to 61, 70 to 90, 97 to 117, 134 to 154, 175 to 195, 209 to 229, and 234 to 254; these read MDII…FLPI, LTKA…MLIY, IDLW…GFIF, LFNV…FLIV, VSWT…IPGT, AEFS…YDLL, FLIG…LFLV, and FTFV…LMIL.

Belongs to the UppP family.

It is found in the cell inner membrane. It catalyses the reaction di-trans,octa-cis-undecaprenyl diphosphate + H2O = di-trans,octa-cis-undecaprenyl phosphate + phosphate + H(+). Functionally, catalyzes the dephosphorylation of undecaprenyl diphosphate (UPP). Confers resistance to bacitracin. The protein is Undecaprenyl-diphosphatase of Sulfurovum sp. (strain NBC37-1).